A 560-amino-acid chain; its full sequence is Cytosolic purine 5'-nucleotidase (560 aa).

Asp-52 functions as the Nucleophile in the catalytic mechanism. Residues Asp-52 and Asp-54 each contribute to the IMP site. Mg(2+) is bound by residues Asp-52 and Asp-54. Residue Asp-54 is the Proton donor of the active site. Residues Arg-144 and Asn-154 each coordinate ATP. Arg-202, Asp-206, Lys-215, Thr-249, Asn-250, Ser-251, and Lys-292 together coordinate IMP. Asp-351 is a Mg(2+) binding site. Ser-418 is subject to Phosphoserine. ATP-binding residues include Gln-453 and Arg-456. Phosphoserine occurs at positions 502, 511, and 527. Residues 541 to 560 (PQEITHCHDEDDDEEEEEEE) are disordered. A required for tetramer assembly region spans residues 548 to 560 (HDEDDDEEEEEEE). A compositionally biased stretch (acidic residues) spans 550 to 560 (EDDDEEEEEEE).

It belongs to the 5'(3')-deoxyribonucleotidase family. As to quaternary structure, homotetramer. Requires Mg(2+) as cofactor.

Its subcellular location is the cytoplasm. It localises to the cytosol. It catalyses the reaction a ribonucleoside 5'-phosphate + H2O = a ribonucleoside + phosphate. The catalysed reaction is a 2'-deoxyribonucleoside + a ribonucleoside 5'-phosphate = a ribonucleoside + a 2'-deoxyribonucleoside 5'-phosphate. The enzyme catalyses IMP + H2O = inosine + phosphate. It carries out the reaction GMP + H2O = guanosine + phosphate. It catalyses the reaction dGMP + H2O = 2'-deoxyguanosine + phosphate. The catalysed reaction is dIMP + H2O = 2'-deoxyinosine + phosphate. The enzyme catalyses XMP + H2O = xanthosine + phosphate. It carries out the reaction inosine + GMP = guanosine + IMP. It catalyses the reaction dGMP + inosine = 2'-deoxyguanosine + IMP. The catalysed reaction is dIMP + inosine = 2'-deoxyinosine + IMP. The enzyme catalyses inosine + UMP = uridine + IMP. It carries out the reaction inosine + CMP = cytidine + IMP. It catalyses the reaction inosine + AMP = IMP + adenosine. Allosterically activated by various compounds including ATP, 2,3-BPG/2,3-Bisphosphoglyceric acid and Ap4A/P1,P4-bis(5'-adenosyl) tetraphosphate. Binding of an allosteric activator is a prerequisiste to magnesium and substrate binding. Inhibited by inorganic phosphate. Functionally, broad specificity cytosolic 5'-nucleotidase that catalyzes the dephosphorylation of 6-hydroxypurine nucleoside 5'-monophosphates. In addition, possesses a phosphotransferase activity by which it can transfer a phosphate from a donor nucleoside monophosphate to an acceptor nucleoside, preferably inosine, deoxyinosine and guanosine. Has the highest activities for IMP and GMP followed by dIMP, dGMP and XMP. Could also catalyze the transfer of phosphates from pyrimidine monophosphates but with lower efficiency. Through these activities regulates the purine nucleoside/nucleotide pools within the cell. In Mus musculus (Mouse), this protein is Cytosolic purine 5'-nucleotidase.